The primary structure comprises 211 residues: Arginine exporter protein ArgO (211 aa).

6 consecutive transmembrane segments (helical) span residues 1–21 (MISY…PLGP), 37–57 (LMIA…GIFG), 68–88 (LLAL…FGAL), 111–131 (IIAT…DTFV), 147–167 (WFAL…ALLA), and 179–199 (AQRI…FQLA).

Belongs to the LysE/ArgO transporter (TC 2.A.75) family.

The protein resides in the cell inner membrane. The enzyme catalyses L-arginine(in) = L-arginine(out). Involved in the export of arginine. Important to control the intracellular level of arginine and the correct balance between arginine and lysine. This Salmonella paratyphi B (strain ATCC BAA-1250 / SPB7) protein is Arginine exporter protein ArgO.